An 811-amino-acid chain; its full sequence is Probable potassium transporter 16 (811 aa).

Topologically, residues 1-66 are cytoplasmic; sequence MAQQQAGARG…GQESWMRTLR (66 aa). A helical membrane pass occupies residues 67 to 87; that stretch reads LGFQCVGILHADLGTSPLYVY. The Extracellular segment spans residues 88–100; that stretch reads QNTFKYGIKHEDD. Residues 101-121 traverse the membrane as a helical segment; that stretch reads IIGVLSLIIYSFVLFTMVKIV. Residues 122 to 190 are Cytoplasmic-facing; it reads FIALHANDDG…KSQLEKKPAK (69 aa). Residues 191–211 traverse the membrane as a helical segment; that stretch reads IAVFFLTIFATALAISDCVLN. The Extracellular portion of the chain corresponds to 212 to 228; that stretch reads PSVSVLSAVNGLKLRAP. The chain crosses the membrane as a helical span at residues 229 to 249; sequence HLTTDEVVWITVGILVVFFAV. Residues 250–256 are Cytoplasmic-facing; the sequence is QRFGTDK. A helical transmembrane segment spans residues 257–277; it reads IGYTFAPVVVVWLLLISGIGI. The Extracellular portion of the chain corresponds to 278-310; sequence YDLVKYDVGVLRAFNPKYIIDYFRRNKKDGWVQ. The chain crosses the membrane as a helical span at residues 311–331; that stretch reads LGEVLLTFTGTEALFADLGYF. Residues 332 to 337 are Cytoplasmic-facing; it reads SIKSIQ. The chain crosses the membrane as a helical span at residues 338 to 358; sequence LSSTFVLLPSVLCTYIGQAAY. The Extracellular segment spans residues 359-379; it reads LRKHMDQQHIQNAFFNSIPRP. The chain crosses the membrane as a helical span at residues 380–400; sequence LFWPMFVLAIMTSVIGCQAMV. Over 401–438 the chain is Cytoplasmic; the sequence is SCAFATMSHLQTLNCFPRIKILHTSRRYSGQLYSPEVN. A helical membrane pass occupies residues 439–459; it reads FFLCLLSCVITLSFRTTGFIV. Residues 460–463 are Extracellular-facing; the sequence is KAHE. A helical membrane pass occupies residues 464 to 484; the sequence is ICVVLVMVITTILMTIVMLLV. Over 485–488 the chain is Cytoplasmic; sequence WKVN. The helical transmembrane segment at 489-509 threads the bilayer; it reads IWWIVLFFVVFMSTETVYLSA. Residues 510 to 519 are Extracellular-facing; it reads VLYKFTKGPY. The chain crosses the membrane as a helical span at residues 520–540; that stretch reads MPLAMSAVLMVIMFVWHYVHV. Residues 541–811 lie on the Cytoplasmic side of the membrane; that stretch reads KRYKFELEHT…LLKVGITYEI (271 aa).

It belongs to the HAK/KUP transporter (TC 2.A.72.3) family.

The protein localises to the membrane. Its function is as follows. High-affinity potassium transporter. In Oryza sativa subsp. japonica (Rice), this protein is Probable potassium transporter 16 (HAK16).